A 183-amino-acid polypeptide reads, in one-letter code: Adenine phosphoribosyltransferase (183 aa).

This sequence belongs to the purine/pyrimidine phosphoribosyltransferase family. As to quaternary structure, homodimer.

The protein localises to the cytoplasm. It carries out the reaction AMP + diphosphate = 5-phospho-alpha-D-ribose 1-diphosphate + adenine. It participates in purine metabolism; AMP biosynthesis via salvage pathway; AMP from adenine: step 1/1. Functionally, catalyzes a salvage reaction resulting in the formation of AMP, that is energically less costly than de novo synthesis. In Escherichia coli (strain K12 / MC4100 / BW2952), this protein is Adenine phosphoribosyltransferase.